Here is a 135-residue protein sequence, read N- to C-terminus: uncharacterized protein (135 aa).

A helical membrane pass occupies residues 4-24 (LGVFLILASIVCGVVAICGCT).

It localises to the membrane. This is an uncharacterized protein from Methanocaldococcus jannaschii (strain ATCC 43067 / DSM 2661 / JAL-1 / JCM 10045 / NBRC 100440) (Methanococcus jannaschii).